Here is a 468-residue protein sequence, read N- to C-terminus: Alcohol dehydrogenase (quinone), cytochrome c subunit (468 aa).

Residues 1-23 form the signal peptide; that stretch reads MINRLKVTFSAAAFSLLAGTALA. Cytochrome c domains follow at residues 31–134, 178–293, and 317–407; these read ALVQ…MHGV, PEIA…KSLP, and TASV…RTSW. Residues Cys45, Cys48, His49, Cys193, Cys196, His197, Cys330, Cys333, and His334 each contribute to the heme c site.

The alcohol dehydrogenase multicomponent enzyme system is composed of a dehydrogenase subunit I (AdhA) and a cytochrome c subunit II (AdhB). It depends on heme c as a cofactor.

Its subcellular location is the cell membrane. The enzyme catalyses ethanol + a ubiquinone = a ubiquinol + acetaldehyde. In terms of biological role, cytochrome c component of the alcohol dehydrogenase multicomponent enzyme system which is involved in the production of acetic acid and in the ethanol oxidase respiratory chain. Quinohemoprotein alcohol dehydrogenase (ADH) catalyzes the oxidation of ethanol to acetaldehyde by transferring electrons to the ubiquinone embedded in the membrane phospholipids. The electrons transfer from ethanol to membranous ubiquinone occurs from pyrroloquinoline quinone (PQQ) to one heme c in subunit I (AdhA), and finally to two heme c in subunit II (AdhB). Besides ubiquinone reduction, ADH also has a ubiquinol (QH2) oxidation reaction which mediates electron transfer from ubiquinol to the non-energy generating bypass oxidase system. The electrons transfer occurs from ubiquinol (QH2) to the additional heme c within subunit II (AdhB). This chain is Alcohol dehydrogenase (quinone), cytochrome c subunit, found in Gluconacetobacter polyoxogenes (Acetobacter polyoxogenes).